Reading from the N-terminus, the 352-residue chain is Septin-2B (352 aa).

Residues 33 to 305 form the Septin-type G domain; sequence KGFEFTLMVV…ENFRSERLKK (273 aa). Positions 43–50 are G1 motif; that stretch reads GESGLGKS. Residues 43 to 50, T77, G103, 182 to 190, G240, and R255 contribute to the GTP site; these read GESGLGKS and KADTLTLRE. The segment at 100-103 is G3 motif; it reads DTPG. The interval 181–184 is G4 motif; it reads AKAD. The segment at 259 to 269 is important for dimerization; sequence WGVVEVENPEH.

Belongs to the TRAFAC class TrmE-Era-EngA-EngB-Septin-like GTPase superfamily. Septin GTPase family. As to quaternary structure, septins polymerize into heterooligomeric protein complexes that form filaments, and associate with cellular membranes, actin filaments and microtubules. GTPase activity is required for filament formation. Can form heterooligomers with other family members and form filaments. Interacts with wdpcp.

Its subcellular location is the cytoplasm. The protein resides in the cytoskeleton. It is found in the spindle. It localises to the cleavage furrow. The protein localises to the midbody. Its subcellular location is the cell projection. The protein resides in the cilium membrane. Its function is as follows. Filament-forming cytoskeletal GTPase. Required for normal organization of the actin cytoskeleton. Plays a role in the biogenesis of polarized columnar-shaped epithelium. Required for the progression through mitosis through regulation of chromosome congression. During anaphase, may be required for chromosome segregation and spindle elongation. Probably plays a role in ciliogenesis and collective cell movements including convergent extension during gastrulation. In cilia, required for the integrity of the diffusion barrier at the base of the primary cilium that prevents diffusion of transmembrane proteins between the cilia and plasma membranes. Controls cell shape and not polarization of cells during convergent extension. This Xenopus laevis (African clawed frog) protein is Septin-2B (sept2-b).